The primary structure comprises 209 residues: MATILYIKASPRGERSHSVTVADAFVKAYSEANPGDVVRVLDVFEADLPAFGTDAVVARYLSGQGDPLSPAQEAAWAAVKRQVEDFKTADKYVIALPMWNFSIPWRLKQFFDIIIQPGLTFSYDEQGYHGLVTGRPVLVSYARGGAYPAGTPAEGWDFQKRYLEHILGFIGFTDIRSVVVEPTLAGGPDTAQAKRAEAVEQARRMALEF.

FMN-binding positions include Ser-10, 16–18 (SHS), and 98–101 (MWNF).

It belongs to the azoreductase type 1 family. In terms of assembly, homodimer. The cofactor is FMN.

The enzyme catalyses 2 a quinone + NADH + H(+) = 2 a 1,4-benzosemiquinone + NAD(+). It carries out the reaction N,N-dimethyl-1,4-phenylenediamine + anthranilate + 2 NAD(+) = 2-(4-dimethylaminophenyl)diazenylbenzoate + 2 NADH + 2 H(+). Quinone reductase that provides resistance to thiol-specific stress caused by electrophilic quinones. Its function is as follows. Also exhibits azoreductase activity. Catalyzes the reductive cleavage of the azo bond in aromatic azo compounds to the corresponding amines. This chain is FMN-dependent NADH:quinone oxidoreductase, found in Nitratidesulfovibrio vulgaris (strain ATCC 29579 / DSM 644 / CCUG 34227 / NCIMB 8303 / VKM B-1760 / Hildenborough) (Desulfovibrio vulgaris).